Reading from the N-terminus, the 1006-residue chain is DNA polymerase (1006 aa).

It belongs to the DNA polymerase type-B family. As to quaternary structure, interacts with OPG148/A20. Component of the Uracil-DNA glycosylase(UDG)-OPG148/A20-polymerase complex; OPG148/A20 and OPG116/UDG form a heterodimeric processivity factor that associates with OPG071/E9 to form the processive polymerase holoenzyme.

It carries out the reaction DNA(n) + a 2'-deoxyribonucleoside 5'-triphosphate = DNA(n+1) + diphosphate. Its function is as follows. Catalyzes DNA synthesis. Acquires processivity by associating with a heterodimeric processivity factor comprised of the viral OPG148/A20 and OPG116/D4 proteins, thereby forming the DNA polymerase holoenzyme. Displays 3'- to 5' exonuclease activity. Might participate in viral DNA recombination. Does not perform OPG116/D4synthesis across an abasic site. The polypeptide is DNA polymerase (OPG071) (Bos taurus (Bovine)).